A 548-amino-acid polypeptide reads, in one-letter code: Membrane-associated tyrosine- and threonine-specific cdc2-inhibitory kinase (548 aa).

Residues 61–89 (PNKQRSWSQPRPQSVSFRSPQNKTPASKL) are disordered. The span at 63 to 85 (KQRSWSQPRPQSVSFRSPQNKTP) shows a compositional bias: polar residues. The 251-residue stretch at 103–353 (FKSICKLGRG…VDWLLSLPAI (251 aa)) folds into the Protein kinase domain. Residues 109–117 (LGRGSFGEV) and K132 contribute to the ATP site. D226 (proton acceptor) is an active-site residue. Mg(2+) contacts are provided by N231, D244, and G246. The short motif at 376-392 (VYQFIVWLLSFVFQWLN) is the Membrane-association motif element. The segment at 464–523 (SPDLLSRPSLGSTSTPRNLSPEFSMRKRSALPLTPNVSRISQDSTGKSRSPSTSHSSSGF) is disordered. Over residues 472–481 (SLGSTSTPRN) the composition is skewed to polar residues. At T478 the chain carries Phosphothreonine; by CDK1. A compositionally biased stretch (low complexity) spans 507 to 521 (STGKSRSPSTSHSSS).

It belongs to the protein kinase superfamily. Ser/Thr protein kinase family. WEE1 subfamily. In terms of assembly, interacts with CDC2-CCNB1 complex. Interacts with Mos during oocyte maturation. In terms of processing, autophosphorylated. Phosphorylated on undefined residues by RSK2 and Mos kinases. Phosphorylation at Thr-478 by cdk1 creates a docking site for plk1/plx1, leading to subsequent phosphorylation by plk1/plk1 and inhibition of the protein kinase activity kinase activity.

The protein localises to the endoplasmic reticulum membrane. Its subcellular location is the golgi apparatus membrane. It catalyses the reaction L-seryl-[protein] + ATP = O-phospho-L-seryl-[protein] + ADP + H(+). It carries out the reaction L-threonyl-[protein] + ATP = O-phospho-L-threonyl-[protein] + ADP + H(+). Negatively regulated by hyperphosphorylation during mitosis. The plk1/plk1 protein kinase may be required for mitotic phosphorylation. Inactivated during oocyte maturation by phosphorylation by RSK2 and Mos kinase. In terms of biological role, acts as a negative regulator of entry into mitosis (G2 to M transition) by phosphorylation of the CDK1 kinase specifically when CDK1 is complexed to cyclins. Mediates phosphorylation of CDK1 predominantly on 'Thr-14'. Also involved in Golgi fragmentation. May be involved in phosphorylation of CDK1 on 'Tyr-15' to a lesser degree, however tyrosine kinase activity is unclear and may be indirect. This Xenopus laevis (African clawed frog) protein is Membrane-associated tyrosine- and threonine-specific cdc2-inhibitory kinase (pkmyt1).